We begin with the raw amino-acid sequence, 330 residues long: Beta-ketoacyl-[acyl-carrier-protein] synthase III (330 aa).

Catalysis depends on residues C114 and H257. The tract at residues 258-262 (QANLR) is ACP-binding. N287 is a catalytic residue.

Belongs to the thiolase-like superfamily. FabH family. In terms of assembly, homodimer.

It is found in the cytoplasm. The enzyme catalyses malonyl-[ACP] + acetyl-CoA + H(+) = 3-oxobutanoyl-[ACP] + CO2 + CoA. Its pathway is lipid metabolism; fatty acid biosynthesis. Catalyzes the condensation reaction of fatty acid synthesis by the addition to an acyl acceptor of two carbons from malonyl-ACP. Catalyzes the first condensation reaction which initiates fatty acid synthesis and may therefore play a role in governing the total rate of fatty acid production. Possesses both acetoacetyl-ACP synthase and acetyl transacylase activities. Its substrate specificity determines the biosynthesis of branched-chain and/or straight-chain of fatty acids. The sequence is that of Beta-ketoacyl-[acyl-carrier-protein] synthase III from Oleidesulfovibrio alaskensis (strain ATCC BAA-1058 / DSM 17464 / G20) (Desulfovibrio alaskensis).